The following is a 203-amino-acid chain: MSRLLRLGITGGIACGKSVVAGYLQRQYGVPIVDADVLARQVVAVGTPIYQAIVDRYGDGICRRDGTLDRSRLGEIVFAQPQERQWLEAQIHPAVVAEMEQAMATCDQPLMALVIPLLFEAHLEGLVDHIWVVATPPEQQLARLQQRDRLSAHAAGQRLASQLPLEEKIRRADTVLWNTGSLEELYRQVDQAFSLLGRGGKGG.

The 198-residue stretch at 6–203 (RLGITGGIAC…SLLGRGGKGG (198 aa)) folds into the DPCK domain. An ATP-binding site is contributed by 14-19 (ACGKSV).

Belongs to the CoaE family.

Its subcellular location is the cytoplasm. It carries out the reaction 3'-dephospho-CoA + ATP = ADP + CoA + H(+). It participates in cofactor biosynthesis; coenzyme A biosynthesis; CoA from (R)-pantothenate: step 5/5. Its function is as follows. Catalyzes the phosphorylation of the 3'-hydroxyl group of dephosphocoenzyme A to form coenzyme A. The polypeptide is Dephospho-CoA kinase (Thermosynechococcus vestitus (strain NIES-2133 / IAM M-273 / BP-1)).